Reading from the N-terminus, the 609-residue chain is Zinc metalloproteinase-disintegrin-like VMP-III (609 aa).

A signal peptide spans M1–S20. Residues I21–A189 constitute a propeptide that is removed on maturation. The region spanning R198–P393 is the Peptidase M12B domain. Residues E201 and D285 each coordinate Ca(2+). Intrachain disulfides connect C308/C388, C348/C372, and C350/C355. H333 is a Zn(2+) binding site. E334 is an active-site residue. Residues H337 and H343 each coordinate Zn(2+). An N-linked (GlcNAc...) asparagine glycan is attached at N371. C388, N391, V403, N406, L408, E410, E413, and D416 together coordinate Ca(2+). The 87-residue stretch at P401 to N487 folds into the Disintegrin domain. 14 disulfide bridges follow: C404–C433, C415–C428, C417–C423, C427–C450, C441–C447, C446–C472, C459–C479, C466–C498, C491–C503, C510–C560, C525–C571, C538–C548, C555–C597, and C591–C602. Residues E465–D467 carry the D/ECD-tripeptide motif. Residues D467, P468, E470, D482, and V483 each coordinate Ca(2+).

This sequence belongs to the venom metalloproteinase (M12B) family. P-III subfamily. P-IIIa sub-subfamily. Monomer. Requires Zn(2+) as cofactor. Expressed by the venom gland.

Its subcellular location is the secreted. Functionally, snake venom metalloproteinase that impairs hemostasis in the envenomed animal. This is Zinc metalloproteinase-disintegrin-like VMP-III from Crotalus viridis viridis (Prairie rattlesnake).